We begin with the raw amino-acid sequence, 316 residues long: Ribosomal protein L11 methyltransferase (316 aa).

Residues Thr157, Gly178, Asp200, and Asn243 each contribute to the S-adenosyl-L-methionine site.

This sequence belongs to the methyltransferase superfamily. PrmA family.

The protein resides in the cytoplasm. It carries out the reaction L-lysyl-[protein] + 3 S-adenosyl-L-methionine = N(6),N(6),N(6)-trimethyl-L-lysyl-[protein] + 3 S-adenosyl-L-homocysteine + 3 H(+). Its function is as follows. Methylates ribosomal protein L11. This chain is Ribosomal protein L11 methyltransferase, found in Streptococcus pneumoniae serotype 2 (strain D39 / NCTC 7466).